A 549-amino-acid polypeptide reads, in one-letter code: Protein X92 (549 aa).

In Trypanosoma brucei brucei, this protein is Protein X92.